A 141-amino-acid chain; its full sequence is HTH-type transcriptional repressor NsrR (141 aa).

Residues 2 to 129 (QLTSFTDYGL…DNYTLADMVQ (128 aa)) form the HTH rrf2-type domain. The segment at residues 28–51 (ISQVTEVYGVSRNHMVKIINQLSR) is a DNA-binding region (H-T-H motif). [2Fe-2S] cluster is bound by residues C91, C96, and C102.

[2Fe-2S] cluster serves as cofactor.

Functionally, nitric oxide-sensitive repressor of genes involved in protecting the cell against nitrosative stress. May require iron for activity. The polypeptide is HTH-type transcriptional repressor NsrR (Yersinia enterocolitica serotype O:8 / biotype 1B (strain NCTC 13174 / 8081)).